Reading from the N-terminus, the 201-residue chain is Kunitz type trypsin inhibitor 104 (201 aa).

A signal peptide spans 1–24 (MSTRSLTIFILAHVWLLMATTSIA). Cystine bridges form between cysteine 63-cysteine 110, cysteine 161-cysteine 173, and cysteine 166-cysteine 169.

Belongs to the protease inhibitor I3 (leguminous Kunitz-type inhibitor) family. Interacts with CP.

The protein resides in the secreted. It localises to the extracellular space. It is found in the apoplast. In terms of biological role, protease inhibitor involved in the control of mycorrhiza establishment and arbuscule development during root colonization by arbuscular mycorrhizal (AM) fungi (e.g. Rhizophagus irregularis). The polypeptide is Kunitz type trypsin inhibitor 104 (Medicago truncatula (Barrel medic)).